Reading from the N-terminus, the 543-residue chain is Carboxypeptidase Y homolog A (543 aa).

The N-terminal stretch at 1-17 is a signal peptide; that stretch reads MKVATSALLVGAVSASV. The propeptide occupies 18 to 128; the sequence is GPQQQVLKFP…KLENYSMRTK (111 aa). Residues Asn122 and Asn213 are each glycosylated (N-linked (GlcNAc...) asparagine). 5 disulfides stabilise this stretch: Cys182–Cys421, Cys316–Cys330, Cys340–Cys363, Cys347–Cys356, and Cys385–Cys391. Residue Ser269 is part of the active site. Residue Asp460 is part of the active site. Asn508 carries an N-linked (GlcNAc...) asparagine glycan. His519 is an active-site residue.

The protein belongs to the peptidase S10 family.

It is found in the vacuole. It carries out the reaction Release of a C-terminal amino acid with broad specificity.. Vacuolar carboxypeptidase involved in degradation of small peptides. Digests preferentially peptides containing an aliphatic or hydrophobic residue in P1' position, as well as methionine, leucine or phenylalanine in P1 position of ester substrate. In Leptosphaeria maculans (strain JN3 / isolate v23.1.3 / race Av1-4-5-6-7-8) (Blackleg fungus), this protein is Carboxypeptidase Y homolog A (CPYA).